The chain runs to 134 residues: Ribonuclease P protein component (134 aa).

It belongs to the RnpA family. In terms of assembly, consists of a catalytic RNA component (M1 or rnpB) and a protein subunit.

The enzyme catalyses Endonucleolytic cleavage of RNA, removing 5'-extranucleotides from tRNA precursor.. Functionally, RNaseP catalyzes the removal of the 5'-leader sequence from pre-tRNA to produce the mature 5'-terminus. It can also cleave other RNA substrates such as 4.5S RNA. The protein component plays an auxiliary but essential role in vivo by binding to the 5'-leader sequence and broadening the substrate specificity of the ribozyme. The polypeptide is Ribonuclease P protein component (Pseudomonas putida (strain GB-1)).